We begin with the raw amino-acid sequence, 527 residues long: Peptide chain release factor 3 (527 aa).

Residues 9–277 (AKRRTFAIIS…CIVDWAPQPL (269 aa)) enclose the tr-type G domain. GTP contacts are provided by residues 18-25 (SHPDAGKT), 86-90 (DTPGH), and 140-143 (NKLD).

Belongs to the TRAFAC class translation factor GTPase superfamily. Classic translation factor GTPase family. PrfC subfamily.

The protein resides in the cytoplasm. Functionally, increases the formation of ribosomal termination complexes and stimulates activities of RF-1 and RF-2. It binds guanine nucleotides and has strong preference for UGA stop codons. It may interact directly with the ribosome. The stimulation of RF-1 and RF-2 is significantly reduced by GTP and GDP, but not by GMP. In Pseudomonas paraeruginosa (strain DSM 24068 / PA7) (Pseudomonas aeruginosa (strain PA7)), this protein is Peptide chain release factor 3.